Here is a 392-residue protein sequence, read N- to C-terminus: Heat-inducible transcription repressor HrcA (392 aa).

Belongs to the HrcA family.

Negative regulator of class I heat shock genes (grpE-dnaK-dnaJ and groELS operons). Prevents heat-shock induction of these operons. The protein is Heat-inducible transcription repressor HrcA of Chlamydia trachomatis serovar D (strain ATCC VR-885 / DSM 19411 / UW-3/Cx).